We begin with the raw amino-acid sequence, 376 residues long: Mitogen-activated protein kinase ERK-A (376 aa).

One can recognise a Protein kinase domain in the interval Y38 to L326. Residues I44–V52 and K67 contribute to the ATP site. D162 serves as the catalytic Proton acceptor. T198 carries the phosphothreonine modification. The short motif at T198–Y200 is the TXY element. Y200 is modified (phosphotyrosine).

It belongs to the protein kinase superfamily. CMGC Ser/Thr protein kinase family. MAP kinase subfamily. It depends on Mg(2+) as a cofactor. In terms of processing, dually phosphorylated on Thr-198 and Tyr-200, which activates the enzyme. Phosphorylated on tyrosine residue(s) in response to insulin. As to expression, in third instar larvae, expressed in eye imaginal disks. In adults, expressed in head and body.

The protein resides in the cytoplasm. The protein localises to the nucleus. The enzyme catalyses L-seryl-[protein] + ATP = O-phospho-L-seryl-[protein] + ADP + H(+). It carries out the reaction L-threonyl-[protein] + ATP = O-phospho-L-threonyl-[protein] + ADP + H(+). Activated by tyrosine and threonine phosphorylation. Functionally, serine/threonine kinase which acts as an essential component of the MAP kinase signal transduction pathway to regulate proliferation, differentiation and effect cell fate decisions in various tissues. Required downstream of phl/Raf in the sev/sevenless, tor/torso, and EGF receptor homolog Egfr signal transduction pathways. Required for embryonic epithelial tissue repair. During larval development, mediates Ptth/tor signaling leading to the production of ecdysone, a hormone required for the initiation of metamorphosis. The sequence is that of Mitogen-activated protein kinase ERK-A from Drosophila melanogaster (Fruit fly).